A 280-amino-acid chain; its full sequence is Hematopoietically-expressed homeobox protein HHEX homolog (280 aa).

2 disordered regions span residues 1–35 and 221–280; these read MSTL…GLAP and RRVK…EKEA. The homeobox DNA-binding region spans 165–224; the sequence is RKGGQVRFSNDQTMELEKKFESQKYLSPPERKKLAKLLQLSERQVKTWFQNRRAKWRRVK. Over residues 232–252 the composition is skewed to basic and acidic residues; it reads GEGDENSHEKPRDLDRDDFSR.

The protein localises to the nucleus. Transcription factor that may play a central role in activating or maintaining gene expression in the vegetal pole. Part of a gene regulatory circuit with Erg and Tgif that operates early in mesoderm development. This is Hematopoietically-expressed homeobox protein HHEX homolog from Patiria miniata (Bat star).